A 360-amino-acid polypeptide reads, in one-letter code: Phenylalanine--tRNA ligase alpha subunit (360 aa).

A Mg(2+)-binding site is contributed by glutamate 260.

Belongs to the class-II aminoacyl-tRNA synthetase family. Phe-tRNA synthetase alpha subunit type 1 subfamily. As to quaternary structure, tetramer of two alpha and two beta subunits. The cofactor is Mg(2+).

The protein localises to the cytoplasm. It carries out the reaction tRNA(Phe) + L-phenylalanine + ATP = L-phenylalanyl-tRNA(Phe) + AMP + diphosphate + H(+). The polypeptide is Phenylalanine--tRNA ligase alpha subunit (Sinorhizobium medicae (strain WSM419) (Ensifer medicae)).